Reading from the N-terminus, the 386-residue chain is MFKRKGALKVAMVAGEASGDLLAAHLMDALRAHRSDIEFAGIGGPRMEARGFHSMVPQEKLAVRGYSEVLKSLPELLKIRRRLREQLLEERPDVFIGVDAPDFNLGLEAGLKKGGIPTVHYVSPSVWAWRPERVQKIGRAVNHVLCLFPMEPPLYRQAGVPVTYVGHPLASEIPLEPDREAMRDQLGLPQGVPVFTLMPGSRQSELEYMVPIYLDTARLLLRQYPEAQFLVPLATRATMDQFEQMLYRFKARDLPIRKLFGHAQMAMIASDVVLVTSGTATLEVALTKRPMVISYKLSALTYRLVKRKIKLPYVGLPNILCGRFVVPELLQKQATPQKLAEEMQRLYTDSAARADMEKAFTELHLALKQDTATRAARAVLEVARCH.

It belongs to the LpxB family.

It carries out the reaction a lipid X + a UDP-2-N,3-O-bis[(3R)-3-hydroxyacyl]-alpha-D-glucosamine = a lipid A disaccharide + UDP + H(+). Its pathway is bacterial outer membrane biogenesis; LPS lipid A biosynthesis. In terms of biological role, condensation of UDP-2,3-diacylglucosamine and 2,3-diacylglucosamine-1-phosphate to form lipid A disaccharide, a precursor of lipid A, a phosphorylated glycolipid that anchors the lipopolysaccharide to the outer membrane of the cell. The polypeptide is Lipid-A-disaccharide synthase (Chromobacterium violaceum (strain ATCC 12472 / DSM 30191 / JCM 1249 / CCUG 213 / NBRC 12614 / NCIMB 9131 / NCTC 9757 / MK)).